A 271-amino-acid chain; its full sequence is 4-hydroxy-tetrahydrodipicolinate reductase (271 aa).

Residues 12–17 (GGSGRM) and glutamate 38 contribute to the NAD(+) site. An NADP(+)-binding site is contributed by arginine 39. Residues 102–104 (GTT) and 126–129 (APNM) each bind NAD(+). The active-site Proton donor/acceptor is the histidine 159. Histidine 160 serves as a coordination point for (S)-2,3,4,5-tetrahydrodipicolinate. Lysine 163 functions as the Proton donor in the catalytic mechanism. 169–170 (GT) is a binding site for (S)-2,3,4,5-tetrahydrodipicolinate.

Belongs to the DapB family.

Its subcellular location is the cytoplasm. The catalysed reaction is (S)-2,3,4,5-tetrahydrodipicolinate + NAD(+) + H2O = (2S,4S)-4-hydroxy-2,3,4,5-tetrahydrodipicolinate + NADH + H(+). It catalyses the reaction (S)-2,3,4,5-tetrahydrodipicolinate + NADP(+) + H2O = (2S,4S)-4-hydroxy-2,3,4,5-tetrahydrodipicolinate + NADPH + H(+). The protein operates within amino-acid biosynthesis; L-lysine biosynthesis via DAP pathway; (S)-tetrahydrodipicolinate from L-aspartate: step 4/4. Catalyzes the conversion of 4-hydroxy-tetrahydrodipicolinate (HTPA) to tetrahydrodipicolinate. The polypeptide is 4-hydroxy-tetrahydrodipicolinate reductase (Shewanella sediminis (strain HAW-EB3)).